The sequence spans 252 residues: Spermatogenesis-associated protein 9 (252 aa).

A helical transmembrane segment spans residues 145–167 (TSIMYASYAALIYLAVCVNAVLA). Positions 208 to 221 (KAKPYRSLPEKPDN) are enriched in basic and acidic residues. The interval 208-235 (KAKPYRSLPEKPDNLLDQPKPPANKQSN) is disordered.

It is found in the membrane. May play at role in testicular development/spermatogenesis and may be an important factor in male infertility. The polypeptide is Spermatogenesis-associated protein 9 (Spata9) (Mus musculus (Mouse)).